A 297-amino-acid polypeptide reads, in one-letter code: 4-hydroxy-tetrahydrodipicolinate synthase (297 aa).

Residue Thr-47 coordinates pyruvate. Tyr-136 functions as the Proton donor/acceptor in the catalytic mechanism. Lys-165 (schiff-base intermediate with substrate) is an active-site residue. Ile-206 contacts pyruvate.

It belongs to the DapA family. As to quaternary structure, homotetramer; dimer of dimers.

The protein resides in the cytoplasm. It carries out the reaction L-aspartate 4-semialdehyde + pyruvate = (2S,4S)-4-hydroxy-2,3,4,5-tetrahydrodipicolinate + H2O + H(+). Its pathway is amino-acid biosynthesis; L-lysine biosynthesis via DAP pathway; (S)-tetrahydrodipicolinate from L-aspartate: step 3/4. Functionally, catalyzes the condensation of (S)-aspartate-beta-semialdehyde [(S)-ASA] and pyruvate to 4-hydroxy-tetrahydrodipicolinate (HTPA). The chain is 4-hydroxy-tetrahydrodipicolinate synthase from Campylobacter fetus subsp. fetus (strain 82-40).